Reading from the N-terminus, the 272-residue chain is MSTLEIIILALLQGLTEFLPISSSAHLILPSQVLGWQDQGLAFDVAVHVGTLLAVMMYFRKELGVMAVAWLGTVGVGPEKGRGGFDAKLSWWILLATIPAGLFGLLGKDFIEEHLRSALVIAMTTLLFGFLLGFADIKAGKRTEHKPMEKLGLKGAMLIGLAQAVALIPGTSRSGITMTIGLMLGLSRDNAARFSFLLSIPAIAMAGSYLTLKLILSTESVDWFAMGLGSLLAFVSAYACIHYFLILLEKLGMMPFVIYRLILGVGLLWFIL.

The next 8 helical transmembrane spans lie at 1–21, 39–59, 91–111, 117–137, 151–171, 196–216, 228–248, and 251–271; these read MSTL…FLPI, QGLA…MMYF, WWIL…KDFI, SALV…FADI, LGLK…IPGT, FLLS…KLIL, LGSL…LILL, and LGMM…LWFI.

Belongs to the UppP family.

It localises to the cell inner membrane. It catalyses the reaction di-trans,octa-cis-undecaprenyl diphosphate + H2O = di-trans,octa-cis-undecaprenyl phosphate + phosphate + H(+). Catalyzes the dephosphorylation of undecaprenyl diphosphate (UPP). Confers resistance to bacitracin. The chain is Undecaprenyl-diphosphatase from Colwellia psychrerythraea (strain 34H / ATCC BAA-681) (Vibrio psychroerythus).